Reading from the N-terminus, the 79-residue chain is RNA-binding protein Hfq (79 aa).

In terms of domain architecture, Sm spans 10 to 70 (DVFLNTVRKQ…ISTIMPGQPV (61 aa)).

This sequence belongs to the Hfq family. In terms of assembly, homohexamer.

In terms of biological role, RNA chaperone that binds small regulatory RNA (sRNAs) and mRNAs to facilitate mRNA translational regulation in response to envelope stress, environmental stress and changes in metabolite concentrations. Also binds with high specificity to tRNAs. The chain is RNA-binding protein Hfq from Bartonella quintana (strain Toulouse) (Rochalimaea quintana).